We begin with the raw amino-acid sequence, 1292 residues long: ABC multidrug transporter MDR5 (1292 aa).

The interval 1–43 (MTEEPKPVTPVLRDGEAGLDTTAPTEAGSLGEEAPKKEADGIV) is disordered. The next 2 membrane-spanning stretches (helical) occupy residues 79-99 (ICGF…TIIF) and 128-148 (LWFV…TICF). The 290-residue stretch at 81-370 (GFFAAVASGT…IAPTLGEFTK (290 aa)) folds into the ABC transmembrane type-1 1 domain. A glycan (N-linked (GlcNAc...) asparagine) is linked at Asn-149. Helical transmembrane passes span 202–222 (VGTC…AFTQ), 226–246 (LTLP…ITVA), 314–334 (EFFI…KLLL), and 344–364 (ILTV…IAPT). The region spanning 405 to 650 (LELSNAVFSY…KGQYWSLVNA (246 aa)) is the ABC transporter 1 domain. 440–447 (GASGSGKS) lines the ATP pocket. The N-linked (GlcNAc...) asparagine glycan is linked to Asn-494. Residues 656–691 (ASDDSSSDTDKETDTQPAEILEKHATTKSTHSKVPH) are disordered. A compositionally biased stretch (basic and acidic residues) spans 663–680 (DTDKETDTQPAEILEKHA). 2 consecutive transmembrane segments (helical) span residues 720 to 740 (HWLF…AFPA) and 768 to 788 (LMFF…GFFL). Positions 725 to 1012 (LLGGIASVVS…IFGFTMNTTK (288 aa)) constitute an ABC transmembrane type-1 2 domain. Asn-820 is a glycosylation site (N-linked (GlcNAc...) asparagine). Transmembrane regions (helical) follow at residues 844–864 (IGLI…ALVT), 866–886 (WKLA…AGFI), 949–969 (IAMI…ALAF), and 986–1006 (FFVI…IFGF). 3 N-linked (GlcNAc...) asparagine glycosylation sites follow: Asn-1009, Asn-1031, and Asn-1052. One can recognise an ABC transporter 2 domain in the interval 1048 to 1285 (VEFRNVSFSY…KGRYFEMCKA (238 aa)). 1083–1090 (GPSGCGKT) serves as a coordination point for ATP.

Belongs to the ABC transporter superfamily. ABCB family. Multidrug resistance exporter (TC 3.A.1.201) subfamily.

The protein resides in the cell membrane. It carries out the reaction itraconazole(in) + ATP + H2O = itraconazole(out) + ADP + phosphate + H(+). Functionally, pleiotropic ABC efflux transporter involved in the modulation susceptibility to itraconazole. In Trichophyton rubrum (strain ATCC MYA-4607 / CBS 118892) (Athlete's foot fungus), this protein is ABC multidrug transporter MDR5.